The chain runs to 203 residues: Glycerol-3-phosphate acyltransferase (203 aa).

The next 4 membrane-spanning stretches (helical) occupy residues 6–26 (LTLL…AVLV), 82–102 (AISL…PIFF), 118–138 (APIG…LVLI), and 141–161 (YSSL…WWLD).

The protein belongs to the PlsY family. In terms of assembly, probably interacts with PlsX.

It localises to the cell inner membrane. It carries out the reaction an acyl phosphate + sn-glycerol 3-phosphate = a 1-acyl-sn-glycero-3-phosphate + phosphate. It functions in the pathway lipid metabolism; phospholipid metabolism. Catalyzes the transfer of an acyl group from acyl-phosphate (acyl-PO(4)) to glycerol-3-phosphate (G3P) to form lysophosphatidic acid (LPA). This enzyme utilizes acyl-phosphate as fatty acyl donor, but not acyl-CoA or acyl-ACP. This is Glycerol-3-phosphate acyltransferase from Shewanella sp. (strain MR-4).